We begin with the raw amino-acid sequence, 245 residues long: NAD-dependent protein deacetylase (245 aa).

The 245-residue stretch at 1-245 (MLLLDKINEL…SIGKVLETVI (245 aa)) folds into the Deacetylase sirtuin-type domain. Positions 26, 30, 37, 38, 107, 109, 110, and 125 each coordinate NAD(+). Residue Phe37 coordinates nicotinamide. Nicotinamide contacts are provided by Ile109 and Asp110. His125 (proton acceptor) is an active-site residue. Cys133, Cys136, Cys155, and Cys158 together coordinate Zn(2+). Thr196, Ser197, Asn219, and Ile237 together coordinate NAD(+).

The protein belongs to the sirtuin family. Class U subfamily. It depends on Zn(2+) as a cofactor.

It is found in the cytoplasm. The enzyme catalyses N(6)-acetyl-L-lysyl-[protein] + NAD(+) + H2O = 2''-O-acetyl-ADP-D-ribose + nicotinamide + L-lysyl-[protein]. Its function is as follows. NAD-dependent protein deacetylase which modulates the activities of several enzymes which are inactive in their acetylated form. The protein is NAD-dependent protein deacetylase of Clostridium acetobutylicum (strain ATCC 824 / DSM 792 / JCM 1419 / IAM 19013 / LMG 5710 / NBRC 13948 / NRRL B-527 / VKM B-1787 / 2291 / W).